The chain runs to 279 residues: MFLYVVCSLAVCFRGLLSLSLQSSPNLCPGVISTPYTLTCPSNTSLPTSWYCNDTRLLRVTQGTLTVDTLICNFSCVGQSGHRYSLWITWYAQPVLQTFCGQPSNTVTCGQHVTLYCSTSGNNVTVWHLPNGQNETVSQTKYYNFTLMNQTEGCYACSNGLSSRLSNRLCFSARCANITPETHTVSVSSTTGFRTFATAPTLFVMKEVKSTYLYIQEHLLVFMTLVALIGTMCGILGTIIFAHCQKQRDSNKTVPQQLQDYYSLHDLCTEDYTQPVDWY.

A signal peptide spans 1–18 (MFLYVVCSLAVCFRGLLS). Over 19–220 (LSLQSSPNLC…TYLYIQEHLL (202 aa)) the chain is Extracellular. A helical membrane pass occupies residues 221 to 241 (VFMTLVALIGTMCGILGTIIF). Residues 242–279 (AHCQKQRDSNKTVPQQLQDYYSLHDLCTEDYTQPVDWY) are Cytoplasmic-facing.

As to quaternary structure, homooligomer.

Its subcellular location is the host membrane. Promotes host cell survival pathways and may contribute to pathogenesis by preventing infected cells from undergoing apoptosis. Acts in host B-cells by mimicking the activated B-cell receptor complex. The cytoplasmic tail of K1 can induce the phosphorylation of a number of different kinases, leading to the activation of survival signaling pathways. The sequence is that of Protein K1 (K1) from Human herpesvirus 8 type P (isolate GK18) (HHV-8).